The chain runs to 121 residues: Small ribosomal subunit protein uS13 (121 aa).

Residues 89 to 121 form a disordered region; that stretch reads MRHRRGLPVRGQHTKNNARTRKGKKVSIAGRKK.

It belongs to the universal ribosomal protein uS13 family. As to quaternary structure, part of the 30S ribosomal subunit. Forms a loose heterodimer with protein S19. Forms two bridges to the 50S subunit in the 70S ribosome.

Functionally, located at the top of the head of the 30S subunit, it contacts several helices of the 16S rRNA. In the 70S ribosome it contacts the 23S rRNA (bridge B1a) and protein L5 of the 50S subunit (bridge B1b), connecting the 2 subunits; these bridges are implicated in subunit movement. Contacts the tRNAs in the A and P-sites. The polypeptide is Small ribosomal subunit protein uS13 (Pediococcus pentosaceus (strain ATCC 25745 / CCUG 21536 / LMG 10740 / 183-1w)).